The chain runs to 556 residues: Urease subunit alpha 1 (556 aa).

The Urease domain maps to 127–556 (GAVDTHVHLL…SVSLNRLYFL (430 aa)). The Ni(2+) site is built by His-132, His-134, and Lys-212. An N6-carboxylysine modification is found at Lys-212. Residue His-214 coordinates substrate. Ni(2+) contacts are provided by His-241 and His-267. The active-site Proton donor is the His-315. Asp-355 contacts Ni(2+).

The protein belongs to the metallo-dependent hydrolases superfamily. Urease alpha subunit family. As to quaternary structure, may form a heterohexamer of 3 UreC (alpha) and 3 UreAB (gamma/beta) subunits. May also form a heterotrimer of UreA (gamma), UreB (beta) and UreC (alpha) subunits. Three heterotrimers associate to form the active enzyme. Ni cation serves as cofactor. Post-translationally, carboxylation allows a single lysine to coordinate two nickel ions.

It localises to the cytoplasm. It catalyses the reaction urea + 2 H2O + H(+) = hydrogencarbonate + 2 NH4(+). Its pathway is nitrogen metabolism; urea degradation; CO(2) and NH(3) from urea (urease route): step 1/1. The sequence is that of Urease subunit alpha 1 from Streptomyces avermitilis (strain ATCC 31267 / DSM 46492 / JCM 5070 / NBRC 14893 / NCIMB 12804 / NRRL 8165 / MA-4680).